We begin with the raw amino-acid sequence, 97 residues long: DNA-directed RNA polymerase subunit omega (97 aa).

Belongs to the RNA polymerase subunit omega family. As to quaternary structure, the RNAP catalytic core consists of 2 alpha, 1 beta, 1 beta' and 1 omega subunit. When a sigma factor is associated with the core the holoenzyme is formed, which can initiate transcription.

The enzyme catalyses RNA(n) + a ribonucleoside 5'-triphosphate = RNA(n+1) + diphosphate. Its function is as follows. Promotes RNA polymerase assembly. Latches the N- and C-terminal regions of the beta' subunit thereby facilitating its interaction with the beta and alpha subunits. The polypeptide is DNA-directed RNA polymerase subunit omega (Coxiella burnetii (strain Dugway 5J108-111)).